A 1024-amino-acid chain; its full sequence is Probable alpha-mannosidase At5g13980 (1024 aa).

The signal sequence occupies residues 1–21 (MDLAKFLCWIVLLLGISLVES). N27 is a glycosylation site (N-linked (GlcNAc...) asparagine). H46 and D48 together coordinate Zn(2+). N63 carries an N-linked (GlcNAc...) asparagine glycan. D168 contributes to the Zn(2+) binding site. N278 carries an N-linked (GlcNAc...) asparagine glycan. A Zn(2+)-binding site is contributed by H410. C461 and C469 are joined by a disulfide. Residues N465, N475, N637, N658, N733, and N823 are each glycosylated (N-linked (GlcNAc...) asparagine). A disulfide bridge connects residues C827 and C832.

This sequence belongs to the glycosyl hydrolase 38 family. In terms of assembly, homodimer. Zn(2+) is required as a cofactor.

The catalysed reaction is Hydrolysis of terminal, non-reducing alpha-D-mannose residues in alpha-D-mannosides.. Liberates mannose from p-nitrophenyl-alpha-D-mannoside in vitro. The sequence is that of Probable alpha-mannosidase At5g13980 from Arabidopsis thaliana (Mouse-ear cress).